Consider the following 763-residue polypeptide: Cadherin-like protein 26 (763 aa).

Positions 1-20 are cleaved as a signal peptide; sequence MDTRGCAWLLLLLSLPQGQS. 4 consecutive Cadherin domains span residues 21–140, 141–250, 251–371, and 370–478; these read HQPL…APQF, PEKE…MPTF, MEDR…PPAF, and AFHP…APTL. The Extracellular portion of the chain corresponds to 21–590; the sequence is HQPLHRSKRR…SECEEPSDTW (570 aa). 3 N-linked (GlcNAc...) asparagine glycosylation sites follow: N56, N60, and N146. Residues N394 and N440 are each glycosylated (N-linked (GlcNAc...) asparagine). Residues 591–611 form a helical membrane-spanning segment; that stretch reads LLWWALSPVGAALMVLSAALL. Residues 612 to 763 are Cytoplasmic-facing; the sequence is CLLRCSCTFG…AMCFTSRVPS (152 aa).

In terms of assembly, homodimer. Component of a cadherin:catenin adhesion complex composed of at least of CDH26, beta-catenin/CTNNB1, alpha-catenin/CTNNA1 and p120 catenin/CTNND1. Post-translationally, N-glycosylated.

It is found in the cell membrane. In terms of biological role, cadherins are calcium-dependent cell adhesion proteins. They preferentially interact with themselves in a homophilic manner in connecting cells; cadherins may thus contribute to the sorting of heterogeneous cell types. Ligand for integrins alpha-E/beta-7, ITGAE:ITGAB7, alpha-4/beta-7, ITGA4:ITGAB7 and alpha-4/beta-1, ITGA4:ITGAB1 through which modulates CD4(+) T cells activation. The chain is Cadherin-like protein 26 (Cdh26) from Mus musculus (Mouse).